Here is a 62-residue protein sequence, read N- to C-terminus: Bacteriocin lactacin-F subunit LafX (62 aa).

The propeptide occupies 1–14; it reads MKLNDKELSKIVGG.

Belongs to the bacteriocin class IIB family. This bacteriocin depends upon the complementation of two peptides for activity: LafA and LafX. Associated with a 180 kDa bacteriocin complex.

Heat stable bacteriocin active against Enterococcus faecalis and other Lactobacilli. This Lactobacillus johnsonii (strain CNCM I-12250 / La1 / NCC 533) protein is Bacteriocin lactacin-F subunit LafX (lafX).